Here is a 357-residue protein sequence, read N- to C-terminus: Probable leucine aminopeptidase MCYG_04170 (357 aa).

The N-terminal stretch at 1–15 is a signal peptide; the sequence is MKVLAALALSALALA. A glycan (N-linked (GlcNAc...) asparagine) is linked at N76. Residues H167 and D185 each coordinate Zn(2+). A glycan (N-linked (GlcNAc...) asparagine) is linked at N186. 2 residues coordinate Zn(2+): E224 and D251. An intrachain disulfide couples C291 to C295. H324 contacts Zn(2+).

The protein belongs to the peptidase M28 family. M28E subfamily. In terms of assembly, monomer. Zn(2+) is required as a cofactor.

It localises to the secreted. Probable extracellular aminopeptidase which contributes to pathogenicity. The protein is Probable leucine aminopeptidase MCYG_04170 of Arthroderma otae (strain ATCC MYA-4605 / CBS 113480) (Microsporum canis).